A 182-amino-acid chain; its full sequence is UPF0301 protein NMCC_1249 (182 aa).

Belongs to the UPF0301 (AlgH) family.

This chain is UPF0301 protein NMCC_1249, found in Neisseria meningitidis serogroup C (strain 053442).